Reading from the N-terminus, the 290-residue chain is MDKIIKSIAQSGAFRAYVLDSTETVALAQEKHNTLSSSTVALGRTLIANQILAANQKGDSKITVKVIGDSSFGHIISVADTKGHVKGYIQNTGVDIKKTATGEVLVGPFMGNGHFVTIIDYGTGNPYTSTTPLITGEIGEDFAYYLTESEQTPSAIGLNVLLDENDKVKVAGGFMVQVLPGASEEEIARYEKRLQEMPAISHLLASKNHVDALLEAIYGDEPYKRLSEEPLSFQCDCSRERFEAALMTLPKADLQAMIDEDKGAEIVCQFCGTKYQFNESDMEALINDKA.

2 cysteine pairs are disulfide-bonded: Cys-235/Cys-237 and Cys-268/Cys-271.

The protein belongs to the HSP33 family. In terms of processing, under oxidizing conditions two disulfide bonds are formed involving the reactive cysteines. Under reducing conditions zinc is bound to the reactive cysteines and the protein is inactive.

It is found in the cytoplasm. Functionally, redox regulated molecular chaperone. Protects both thermally unfolding and oxidatively damaged proteins from irreversible aggregation. Plays an important role in the bacterial defense system toward oxidative stress. This chain is 33 kDa chaperonin, found in Streptococcus pyogenes serotype M5 (strain Manfredo).